A 186-amino-acid chain; its full sequence is Interferon beta-3 (186 aa).

Residues 1 to 21 (MTYRCLLPMVLLLCFSTTALS) form the signal peptide. The cysteines at positions 52 and 161 are disulfide-linked. 2 N-linked (GlcNAc...) asparagine glycosylation sites follow: Asn131 and Asn173.

It belongs to the alpha/beta interferon family. Monomer.

Its subcellular location is the secreted. Its function is as follows. Has antiviral, antibacterial and anticancer activities. This Bos taurus (Bovine) protein is Interferon beta-3 (IFNB3).